The primary structure comprises 527 residues: GMP synthase [glutamine-hydrolyzing] (527 aa).

A Glutamine amidotransferase type-1 domain is found at 4 to 202; sequence KILILDFGSQ…VLKICGAQPD (199 aa). Cys81 functions as the Nucleophile in the catalytic mechanism. Catalysis depends on residues His176 and Glu178. Residues 203–395 enclose the GMPS ATP-PPase domain; it reads WEMGHYIDEA…LGLPPAMVYR (193 aa). 230–236 provides a ligand contact to ATP; sequence SGGVDSS.

As to quaternary structure, homodimer.

The enzyme catalyses XMP + L-glutamine + ATP + H2O = GMP + L-glutamate + AMP + diphosphate + 2 H(+). The protein operates within purine metabolism; GMP biosynthesis; GMP from XMP (L-Gln route): step 1/1. In terms of biological role, catalyzes the synthesis of GMP from XMP. In Paraburkholderia xenovorans (strain LB400), this protein is GMP synthase [glutamine-hydrolyzing].